The chain runs to 306 residues: Serrate RNA effector molecule homolog (306 aa).

A disordered region spans residues 1-28 (HKEEELLGSSGGPPPEEPPKEGNPAEIN). Thr-101 carries the post-translational modification Phosphothreonine. The residue at position 109 (Ser-109) is a Phosphoserine. The segment at 251–284 (GPPYPHGPYGAGRGNYDAFRGQGGYPGKPRNRMV) is disordered. 3 positions are modified to omega-N-methylarginine: Arg-263, Arg-270, and Arg-280.

The protein belongs to the ARS2 family. As to quaternary structure, interacts with CASP8AP2, ERBB4, NCBP1/CBP80 and DROSHA. Interacts with LUZP4. Interacts with NCBP2/CBP20 and NCBP3.

Its subcellular location is the nucleus. It is found in the nucleoplasm. It localises to the cytoplasm. Acts as a mediator between the cap-binding complex (CBC) and the primary microRNAs (miRNAs) processing machinery during cell proliferation. Contributes to the stability and delivery of capped primary miRNA transcripts to the primary miRNA processing complex containing DGCR8 and DROSHA, thereby playing a role in RNA-mediated gene silencing (RNAi) by miRNAs. Binds capped RNAs (m7GpppG-capped RNA); however interaction is probably mediated via its interaction with NCBP1/CBP80 component of the CBC complex. Involved in cell cycle progression at S phase. Does not directly confer arsenite resistance but rather modulates arsenic sensitivity. Independently of its activity on miRNAs, necessary and sufficient to promote neural stem cell self-renewal. Does so by directly binding SOX2 promoter and positively regulating its transcription. In Cricetulus griseus (Chinese hamster), this protein is Serrate RNA effector molecule homolog (SRRT).